An 84-amino-acid polypeptide reads, in one-letter code: Cryptic plasmid protein A (84 aa).

This is Cryptic plasmid protein A (cppA) from Neisseria gonorrhoeae.